Consider the following 560-residue polypeptide: Glutamate--tRNA ligase, chloroplastic/mitochondrial (560 aa).

47–49 is an L-glutamate binding site; it reads RFA. A 'HIGH' region motif is present at residues 50-60; sequence PSPTGNLHVGG. Residue histidine 57 coordinates ATP. L-glutamate contacts are provided by residues glutamate 83, 235–239, and arginine 253; that span reads YNFCV. ATP is bound by residues glutamate 256 and 291–295; that span reads KLSKR. Positions 291–295 match the 'KMSKS' region motif; that stretch reads KLSKR.

The protein belongs to the class-I aminoacyl-tRNA synthetase family. Glutamate--tRNA ligase type 1 subfamily.

It is found in the plastid. The protein resides in the chloroplast. Its subcellular location is the mitochondrion. The catalysed reaction is tRNA(Glu) + L-glutamate + ATP = L-glutamyl-tRNA(Glu) + AMP + diphosphate. Functionally, catalyzes the attachment of glutamate to tRNA(Glu) in a two-step reaction: glutamate is first activated by ATP to form Glu-AMP and then transferred to the acceptor end of tRNA(Glu). This Hordeum vulgare (Barley) protein is Glutamate--tRNA ligase, chloroplastic/mitochondrial.